The following is a 147-amino-acid chain: Myoglobin (147 aa).

One can recognise a Globin domain in the interval 2–141 (ADFDMVLKCW…IITDMEADYK (140 aa)). A nitrite-binding site is contributed by His60. An O2-binding site is contributed by His60. A heme b-binding site is contributed by His89.

This sequence belongs to the globin family. Monomeric.

It is found in the cytoplasm. Its subcellular location is the sarcoplasm. It catalyses the reaction Fe(III)-heme b-[protein] + nitric oxide + H2O = Fe(II)-heme b-[protein] + nitrite + 2 H(+). It carries out the reaction H2O2 + AH2 = A + 2 H2O. Functionally, monomeric heme protein which primary function is to store oxygen and facilitate its diffusion within muscle tissues. Reversibly binds oxygen through a pentacoordinated heme iron and enables its timely and efficient release as needed during periods of heightened demand. Depending on the oxidative conditions of tissues and cells, and in addition to its ability to bind oxygen, it also has a nitrite reductase activity whereby it regulates the production of bioactive nitric oxide. Under stress conditions, like hypoxia and anoxia, it also protects cells against reactive oxygen species thanks to its pseudoperoxidase activity. The chain is Myoglobin (mb) from Channichthys rhinoceratus (Unicorn icefish).